A 354-amino-acid chain; its full sequence is Interferon-inducible protein AIM2 (354 aa).

In terms of domain architecture, Pyrin spans M1–E87. Residues N95–D124 are disordered. Residues Q109–R120 are compositionally biased toward polar residues. An HIN-200 domain is found at M144 to I341.

This sequence belongs to the HIN-200 family. Self-associates; forms homooligomers in response to cytosolic double-stranded DNA (dsDNA) and the dsDNA seems to serve as oligomerization platform. Component of AIM2 inflammasome, which consists of a signal sensor component (AIM2), an adapter (PYCARD/ASC), which recruits an effector pro-inflammatory caspase (CASP1). Interacts (via pyrin domain) with PYCARD/ASC (via pyrin domain); interaction is direct. Component of the AIM2 PANoptosome complex, a multiprotein complex that drives inflammatory cell death (PANoptosis). Interacts with EIF2AK2/PKR. Interacts with MAPRE1. Interacts (via HIN-200 domain) with IFI202 (via HIN-200 domain 2); preventing activation of the AIM2 inflammasome. Interacts with RACK1; promoting association with PP2A phosphatase and dephosphorylation of AKT1. Interacts with TRIM11; promoting AIM2 recruitment to autophagosomes and autophagy-dependent degradation. Post-translationally, degraded via selective autophagy following interaction with TRIM11. As to expression, expressed in developing neurons. Highly expressed in regulatory T-cells (Treg).

The protein localises to the cytoplasm. The protein resides in the inflammasome. Its subcellular location is the nucleus. Inactive in absence of double-stranded DNA (dsDNA). Homooligomerizes upon binding to dsDNA, dsDNA serving as an oligomerization platform. AIM2 requires large dsDNA to generate a structural template that couples dsDNA ligand-binding and homooligomerization. Homooligomerization is followed by recruitment of PYCARD/ASC to initiate speck formation (nucleation). AIM2 and PYCARD/ASC homooligomer filaments assemble bidirectionally and the recognition between AIM2 and PYCARD/ASC oligomers occurs in a head-to-tail manner. Clustered PYCARD/ASC nucleates the formation of CASP1 filaments through the interaction of their respective CARD domains, acting as a platform for CASP1 polymerization and activation. Active CASP1 then specifically processes protein precursors, such as gasdermin-D (GSDMD), IL1B and IL18, leading to the release of mature cytokines in the extracellular milieu or pyroptosis, depending on cell type. AIM2 can be activated in response to events that cause genomic DNA (HIV protease inhibitor nelfinavir) or mitochondrial DNA release in the cytoplasm (such as Perfluoroalkyl substance pollutants or cholesterol overload). Activation of the AIM2 inflammasome is inhibited by IFI202. Activation of the AIM2 inflammasome is inhibited by TRIM11, which promotes autophagy-dependent degradation of AIM2. Sensor component of the AIM2 inflammasome, which mediates inflammasome activation in response to the presence of double-stranded DNA (dsDNA) in the cytosol, leading to subsequent pyroptosis. Inflammasomes are supramolecular complexes that assemble in the cytosol in response to pathogens and other damage-associated signals and play critical roles in innate immunity and inflammation. Acts as a recognition receptor (PRR): specifically recognizes and binds dsDNA in the cytosol, and mediates the formation of the inflammasome polymeric complex composed of AIM2, CASP1 and PYCARD/ASC. Recruitment of pro-caspase-1 (proCASP1) to the AIM2 inflammasome promotes caspase-1 (CASP1) activation, which subsequently cleaves and activates inflammatory cytokines IL1B and IL18 and gasdermin-D (GSDMD), promoting cytokine secretion. In some cells, CASP1 activation mediates cleavage and activation of GSDMD, triggering pyroptosis without promoting cytokine secretion. Detects cytosolic dsDNA of viral and bacterial origin in a non-sequence-specific manner. Involved in the DNA damage response caused by acute ionizing radiation by mediating pyroptosis of intestinal epithelial cells and bone marrow cells in response to double-strand DNA breaks. Mechanistically, AIM2 senses DNA damage in the nucleus to mediate inflammasome assembly and inflammatory cell death. Also acts as a regulator of neurodevelopment via its role in the DNA damage response: acts by promoting neural cell death in response to DNA damage in the developing brain, thereby purging genetically compromised cells of the central nervous system. Pyroptosis mediated by the AIM2 inflammasome in response to DNA damage is dependent on GSDMD without involving IL1B and IL18 cytokine secretion. Also acts as a mediator of pyroptosis, necroptosis and apoptosis (PANoptosis), an integral part of host defense against pathogens, in response to bacterial infection. Can also trigger PYCARD/ASC-dependent, caspase-1-independent cell death that involves caspase-8 (CASP8). Functionally, also acts as a tumor suppressor independently of its role in inflammatory response. Able to suppress overt cell proliferation in enterocytes: restricts stem cell proliferation in the intestinal mucosa in an inflammasome-independent manner, contributing to a decrease in the likelihood of colorectal cancer development. AIM2 suppresses cell proliferation by inhibiting phosphorylation of AKT1 at 'Ser-473', preventing AKT1 activation and AKT-mTOR signaling pathway. Inhibits AKT1 phosphorylation both by inhibiting the activity of PRKDC/DNA-PK kinase and promoting dephosphorylation by PP2A phosphatase. Also acts as a key regulator of regulatory T-cells (Treg) homeostasis by promoting their stability: acts by preventing AKT1 activation. Its role in Treg homeostasis is important to restain autoimmune diseases. This Mus musculus (Mouse) protein is Interferon-inducible protein AIM2.